We begin with the raw amino-acid sequence, 394 residues long: uncharacterized protein (394 aa).

2 helical membrane passes run 31–51 and 57–77; these read LAIL…LSGL and LIIA…SLLI.

Belongs to the chlamydial CPn_0129/CT_036/TC_0306 family.

Its subcellular location is the cell membrane. This is an uncharacterized protein from Chlamydia pneumoniae (Chlamydophila pneumoniae).